Here is an 862-residue protein sequence, read N- to C-terminus: Valine--tRNA ligase (862 aa).

The short motif at 47-57 is the 'HIGH' region element; the sequence is PTASGSLHIGH. The segment at 110 to 130 is disordered; it reads EPGLTPPFEGGDNKSSKAADQ. Residues 120–129 show a composition bias toward basic and acidic residues; that stretch reads GDNKSSKAAD. A 'KMSKS' region motif is present at residues 584–588; sequence KMSKS. An ATP-binding site is contributed by Lys587.

It belongs to the class-I aminoacyl-tRNA synthetase family. ValS type 2 subfamily. Monomer.

The protein resides in the cytoplasm. It catalyses the reaction tRNA(Val) + L-valine + ATP = L-valyl-tRNA(Val) + AMP + diphosphate. Functionally, catalyzes the attachment of valine to tRNA(Val). As ValRS can inadvertently accommodate and process structurally similar amino acids such as threonine, to avoid such errors, it has a 'posttransfer' editing activity that hydrolyzes mischarged Thr-tRNA(Val) in a tRNA-dependent manner. The polypeptide is Valine--tRNA ligase (Leifsonia xyli subsp. xyli (strain CTCB07)).